Reading from the N-terminus, the 159-residue chain is Globin CTT-W (159 aa).

The signal sequence occupies residues 1–16; the sequence is MKFLVILTLCIAGAIA. The region spanning 17 to 159 is the Globin domain; that stretch reads HCDKAPFIKA…HHAIVYSILE (143 aa). Residues His-73 and His-108 each coordinate heme b.

The protein belongs to the globin family.

The sequence is that of Globin CTT-W (CTT-W) from Chironomus thummi piger (Midge).